Reading from the N-terminus, the 813-residue chain is Histone acetyltransferase KAT2B (813 aa).

2 disordered regions span residues 1–55 (MAEA…GGSA) and 380–423 (NSTS…EAKR). Positions 32–46 (ASCGPATAVAAAGTA) are enriched in low complexity. Residues 380 to 391 (NSTSHEQINGGR) are compositionally biased toward polar residues. Basic and acidic residues predominate over residues 406-423 (PGEKRKMNNSHAPEEAKR). An N-acetyltransferase domain is found at 484–632 (LNQKPNKKIL…GATLMGCELN (149 aa)). Residue E551 is the Proton donor/acceptor of the active site. Residues 555-557 (CAV), 562-568 (QVKGYGT), and 593-596 (YAIG) contribute to the acetyl-CoA site. One can recognise a Bromo domain in the interval 704-808 (KDPEQLYSTL…KFFFSKIKEA (105 aa)).

The protein belongs to the acetyltransferase family. GCN5 subfamily. Interacts with BCAS3. Interacts with SIRT1. Interacts with EP300, CREBBP and DDX17. Component of a large chromatin remodeling complex, at least composed of MYSM1, KAT2B/PCAF, RBM10 and KIF11/TRIP5. Interacts with KLF1; the interaction does not acetylate KLF1 and there is no enhancement of its transactivational activity. Interacts with NFE4. Interacts with MECOM. Interacts with NR2C2 (hypophosphorylated and unsumoylated form); the interaction promotes the transactivation activity of NR2C2. Interacts with NFE4. Interacts with MECOM. Interacts with E2F1; the interaction acetylates E2F1 augmenting its DNA-binding and transcriptional activity. Interacts with NPAS2, BMAL1 and CLOCK. Interacts (unsumoylated form) with NR2C1; the interaction promotes transactivation activity. Interacts with CEBPB. Interacts with NR4A3. Interacts with TBX5. Interacts with PLK4. Interacts with RB1; this interaction leads to RB1 acetylation. Interacts with VRK1.

Its subcellular location is the nucleus. It is found in the cytoplasm. The protein resides in the cytoskeleton. It localises to the microtubule organizing center. The protein localises to the centrosome. The enzyme catalyses L-lysyl-[histone] + acetyl-CoA = N(6)-acetyl-L-lysyl-[histone] + CoA + H(+). The catalysed reaction is L-lysyl-[protein] + acetyl-CoA = N(6)-acetyl-L-lysyl-[protein] + CoA + H(+). It carries out the reaction spermidine + acetyl-CoA = N(8)-acetylspermidine + CoA + H(+). In terms of biological role, functions as a histone acetyltransferase (HAT) to promote transcriptional activation. Has significant histone acetyltransferase activity with core histones (H3 and H4), and also with nucleosome core particles. Has a a strong preference for acetylation of H3 at 'Lys-9' (H3K9ac). Also acetylates non-histone proteins, such as ACLY, MAPRE1/EB1, PLK4, RRP9/U3-55K and TBX5. Acts as a circadian transcriptional coactivator which enhances the activity of the circadian transcriptional activators: NPAS2-BMAL1 and CLOCK-BMAL1 heterodimers. Involved in heart and limb development by mediating acetylation of TBX5, acetylation regulating nucleocytoplasmic shuttling of TBX5. Acts as a negative regulator of centrosome amplification by mediating acetylation of PLK4. Acetylates RRP9/U3-55K, a core subunit of the U3 snoRNP complex, impairing pre-rRNA processing. Acetylates MAPRE1/EB1, promoting dynamic kinetochore-microtubule interactions in early mitosis. Also acetylates spermidine. The protein is Histone acetyltransferase KAT2B of Mus musculus (Mouse).